The sequence spans 122 residues: Biogenesis of lysosome-related organelles complex 1 subunit BLS1 (122 aa).

Phosphoserine is present on Ser33.

This sequence belongs to the BLOC1S1 family. In terms of assembly, component of the biogenesis of lysosome-related organelles complex-1 (BLOC-1) composed of at least BLI1, BLS1, CNL1, KXD1, SNN1 and VAB2.

It localises to the endosome. Component of the biogenesis of lysosome-related organelles complex-1 (BLOC-1), a complex involved in endosomal cargo sorting. The protein is Biogenesis of lysosome-related organelles complex 1 subunit BLS1 (BLS1) of Saccharomyces cerevisiae (strain YJM789) (Baker's yeast).